An 838-amino-acid chain; its full sequence is Transforming acidic coiled-coil-containing protein 3 (838 aa).

Position 2 is an N-acetylserine (Ser-2). Ser-25, Ser-39, and Ser-71 each carry phosphoserine. Positions 123–227 (EADTDLLGDA…HGAEEECKAE (105 aa)) are disordered. Residues 132 to 164 (ASPAFGSGSSSESGPGALADLDCSSSSQSPGSS) are compositionally biased toward low complexity. Phosphoserine occurs at positions 175 and 177. Residues 204 to 227 (DPCRTESQHKAETPHGAEEECKAE) show a composition bias toward basic and acidic residues. Ser-250, Ser-317, and Ser-402 each carry phosphoserine. The segment at 311-527 (GRAMTLSPQE…LELKEESFRD (217 aa)) is disordered. Basic and acidic residues predominate over residues 403–412 (YHLDWDKMDD). Phosphoserine is present on Ser-434. Residues 492 to 503 (NSASTSLPTSCP) are compositionally biased toward polar residues. A necessary but not sufficient for spindle localization region spans residues 522–577 (EESFRDPAEVLGTGAEVDYLEQFGTSSFKESALRKQSLYLKFDPLLRDSPGRPVPV). A Phosphoserine; by AURKA modification is found at Ser-558. The disordered stretch occupies residues 569–594 (DSPGRPVPVATETSSMHGANETPSGR). Polar residues predominate over residues 579 to 591 (TETSSMHGANETP). Residues 594-838 (RPREAKLVEF…DDLISKMEKI (245 aa)) are necessary but not sufficient for spindle localization. A coiled-coil region spans residues 637–837 (LQYSQKDLDA…CDDLISKMEK (201 aa)).

It belongs to the TACC family. In terms of assembly, interacts with microtubules. Interacts with CKAP5 independently of clathrin. Interacts with CKAP5 and clathrin forming the TACC3/ch-TOG/clathrin complex located at spindle inter-microtubules bridges; TACC3 (phosphorylated at Ser-558 by AURKA) and CLTC are proposed to form a composite microtubule interaction surface. Interacts with CCDC100/CEP120. The coiled coil C-terminal region interacts with AH receptor nuclear translocator protein (ARNT) and ARNT2. Interacts with GCN5L2 and PCAF.

Its subcellular location is the cytoplasm. The protein resides in the cytoskeleton. It is found in the microtubule organizing center. It localises to the centrosome. The protein localises to the spindle. Its subcellular location is the spindle pole. Its function is as follows. Plays a role in the microtubule-dependent coupling of the nucleus and the centrosome. Involved in the processes that regulate centrosome-mediated interkinetic nuclear migration (INM) of neural progenitors. Acts as a component of the TACC3/ch-TOG/clathrin complex proposed to contribute to stabilization of kinetochore fibers of the mitotic spindle by acting as inter-microtubule bridge. The TACC3/ch-TOG/clathrin complex is required for the maintenance of kinetochore fiber tension. May be involved in the control of cell growth and differentiation. May contribute to cancer. The chain is Transforming acidic coiled-coil-containing protein 3 (TACC3) from Homo sapiens (Human).